The following is a 799-amino-acid chain: Oligopeptide transporter 1 (799 aa).

2 disordered regions span residues 1–26 (MSTI…PIQI) and 43–64 (DVNN…QKFD). The Extracellular segment spans residues 1-108 (MSTIYRESDS…DPTIRLNHWR (108 aa)). Residues 13 to 26 (SEPSPTPTTIPIQI) are compositionally biased toward low complexity. A glycan (N-linked (GlcNAc...) asparagine) is linked at N46. Phosphothreonine occurs at positions 48, 50, and 51. The helical transmembrane segment at 109–129 (TWFLTTVFVVVFAGVNQFFSL) threads the bilayer. Residues 130-135 (RYPSLE) lie on the Cytoplasmic side of the membrane. A helical membrane pass occupies residues 136-156 (INFLVAQVVCYPIGRILALLP). Topologically, residues 157-177 (DWKCSKVPFFDLNPGPFTKKE) are extracellular. Residues 178–198 (HAVVTIAVALTSSTAYAMYIL) form a helical membrane-spanning segment. Topologically, residues 199–210 (NAQGSFYNMKLN) are cytoplasmic. A helical transmembrane segment spans residues 211–231 (VGYQFLLVWTSQMIGYGAAGL). The Extracellular portion of the chain corresponds to 232–276 (TRRWVVNPASSIWPQTLISVSLFDSLHSRKVEKTVANGWTMPRYR). A helical membrane pass occupies residues 277–297 (FFLIVLIGSFIWYWVPGFLFT). Residues 298–313 (GLSYFNVILWGSKTRH) lie on the Cytoplasmic side of the membrane. The helical transmembrane segment at 314–334 (NFIANTIFGTQSGLGALPITF) threads the bilayer. Residues 335–359 (DYTQVSQAMSGSVFATPFYVSANTY) are Extracellular-facing. The helical transmembrane segment at 360 to 380 (ASVLIFFVIVLPCLYFTNTWY) threads the bilayer. Residues 381 to 428 (AKYMPVISGSTYDNTQNKYNVTKILNEDYSINLEKYKEYSPVFVPFSY) lie on the Cytoplasmic side of the membrane. The chain crosses the membrane as a helical span at residues 429 to 449 (LLSYALNFAAVIAVFVHCILY). At 450–482 (HGKDIVAKFKDRKNGGTDIHMRIYSKNYKDCPD) the chain is on the extracellular side. Residues 483–503 (WWYLLLQIVMIGLGFVAVCCF) form a helical membrane-spanning segment. The Cytoplasmic segment spans residues 504–508 (DTKFP). A helical membrane pass occupies residues 509 to 529 (AWAFVIAILISLVNFIPQGIL). At 530–540 (EAMTNQHVGLN) the chain is on the extracellular side. The helical transmembrane segment at 541–561 (IITELICGYMLPLRPMANLLF) threads the bilayer. Topologically, residues 562–590 (KLYGFIVMRQGLNLSRDLKLAMYMKVSPR) are cytoplasmic. The helical transmembrane segment at 591 to 611 (LIFAVQIYATIISGMVNVGVQ) threads the bilayer. At 612–659 (EWMMHNIDGLCTTDQPNGFTCANGRTVFNASIIWSLPKYLFSSGRIYN) the chain is on the extracellular side. N-linked (GlcNAc...) asparagine glycosylation is present at N640. Residues 660 to 680 (PLMWFFLIGLLFPLAVYAVQW) traverse the membrane as a helical segment. Topologically, residues 681–736 (KFPKFKFAKHIHTPVFFTGPGNIPPSTPYNYSLFFAMSFCLNLIRKRWRAWFNKYN) are cytoplasmic. The chain crosses the membrane as a helical span at residues 737–757 (FVMGAGVEAGVAISVVIIFLC). Residues 758–799 (VQYPGGKLSWWGNNVWKRTYDNDYKKFYTLKKGETFGYDKWW) lie on the Extracellular side of the membrane.

The protein belongs to the oligopeptide OPT transporter family.

It localises to the cell membrane. Functionally, high affinity transporter for glutathione. Also transports tetra- and pentapeptides like the opioids leucine enkephalin (Tyr-Gly-Gly-Phe-Leu) and methionine enkephalin (Tyr-Gly-Gly_Phe-Met) across the cell membrane. This chain is Oligopeptide transporter 1 (OPT1), found in Saccharomyces cerevisiae (strain ATCC 204508 / S288c) (Baker's yeast).